The chain runs to 201 residues: Retinol-binding protein 4 (201 aa).

Positions 1–18 (MEWVWALVLLAALGGGSA) are cleaved as a signal peptide. 3 disulfide bridges follow: C22/C178, C88/C192, and C138/C147. Q116 is a binding site for substrate. Residue R139 is modified to Omega-N-methylarginine.

It belongs to the calycin superfamily. Lipocalin family. In terms of assembly, interacts with TTR. Interaction with TTR prevents its loss by filtration through the kidney glomeruli. Interacts with STRA6.

It is found in the secreted. In terms of biological role, retinol-binding protein that mediates retinol transport in blood plasma. Delivers retinol from the liver stores to the peripheral tissues. Transfers the bound all-trans retinol to STRA6, that then facilitates retinol transport across the cell membrane. This chain is Retinol-binding protein 4 (Rbp4), found in Mus musculus (Mouse).